A 98-amino-acid polypeptide reads, in one-letter code: Small ribosomal subunit protein bS20 (98 aa).

Over residues 1 to 12 (MAPKKTTKKGGP) the composition is skewed to basic residues. A disordered region spans residues 1–20 (MAPKKTTKKGGPQKRPSAEK).

This sequence belongs to the bacterial ribosomal protein bS20 family.

In terms of biological role, binds directly to 16S ribosomal RNA. In Chlamydia caviae (strain ATCC VR-813 / DSM 19441 / 03DC25 / GPIC) (Chlamydophila caviae), this protein is Small ribosomal subunit protein bS20.